The sequence spans 154 residues: Small ribosomal subunit protein uS11c (154 aa).

Belongs to the universal ribosomal protein uS11 family. In terms of assembly, part of the 30S ribosomal subunit.

The protein localises to the plastid. This Helicosporidium sp. subsp. Simulium jonesii (Green alga) protein is Small ribosomal subunit protein uS11c.